The following is a 187-amino-acid chain: Elongation factor P (187 aa).

It belongs to the elongation factor P family.

The protein resides in the cytoplasm. Its pathway is protein biosynthesis; polypeptide chain elongation. In terms of biological role, involved in peptide bond synthesis. Stimulates efficient translation and peptide-bond synthesis on native or reconstituted 70S ribosomes in vitro. Probably functions indirectly by altering the affinity of the ribosome for aminoacyl-tRNA, thus increasing their reactivity as acceptors for peptidyl transferase. This Azobacteroides pseudotrichonymphae genomovar. CFP2 protein is Elongation factor P.